The primary structure comprises 734 residues: Cleavage stimulation factor subunit 77 (734 aa).

12 HAT repeats span residues 20–52, 54–85, 93–128, 139–172, 198–237, 246–278, 280–312, 314–345, 347–379, 382–414, 416–450, and 474–505; these read SPIA…AQMA, NNDD…FIRK, EGQE…FLKS, HRKT…FENT, ERKK…FEKG, SSTK…WHVK, GSTD…MEES, GAIQ…FLRR, EGVE…MAFC, KEPK…FLTR, NDDR…FEQT, and EGSS…DLDH. The disordered stretch occupies residues 637 to 734; that stretch reads VKQSFAAKGN…FSGELSGSTG (98 aa). Residues 664–677 are compositionally biased toward basic and acidic residues; that stretch reads LPRDRRATKRKDSD. Positions 709–734 are enriched in polar residues; sequence ATSSQTPTGSTSYGSAFSGELSGSTG.

Homodimer. Belongs to the CSTF complex. Forms a complex with cleavage and polyadenylation specificity factor (CPSF) subunits CPSF30, CSTF64, PCFS1, PCFS5 and FIPS5.

It localises to the nucleus. One of the multiple factors required for polyadenylation and 3'-end cleavage of pre-mRNAs. Required for the targeted 3' processing of antisense transcripts that triggers transcriptional silencing of the corresponding sense gene. The protein is Cleavage stimulation factor subunit 77 of Arabidopsis thaliana (Mouse-ear cress).